We begin with the raw amino-acid sequence, 732 residues long: Translation initiation factor IF-2 (732 aa).

The tract at residues 40 to 147 (PEVVEKLDHT…QQEQPMKKEK (108 aa)) is disordered. Over residues 42–67 (VVEKLDHTYNKKNERPQASAPKEKQK) the composition is skewed to basic and acidic residues. A compositionally biased stretch (basic residues) spans 90 to 103 (KVPKKKSANKKKEG). Positions 104-117 (KKHDLQLQQQEKKI) are enriched in basic and acidic residues. Basic residues predominate over residues 118-129 (FHQQKKKIKGKA). Positions 233-402 (ERPPVVTIMG…LLVSEMEELK (170 aa)) constitute a tr-type G domain. The interval 242 to 249 (GHVDHGKT) is G1. 242–249 (GHVDHGKT) contacts GTP. The interval 267–271 (GITQH) is G2. The interval 288-291 (DTPG) is G3. GTP-binding positions include 288 to 292 (DTPGH) and 342 to 345 (NKMD). The G4 stretch occupies residues 342 to 345 (NKMD). A G5 region spans residues 378 to 380 (SAK).

The protein belongs to the TRAFAC class translation factor GTPase superfamily. Classic translation factor GTPase family. IF-2 subfamily.

Its subcellular location is the cytoplasm. One of the essential components for the initiation of protein synthesis. Protects formylmethionyl-tRNA from spontaneous hydrolysis and promotes its binding to the 30S ribosomal subunits. Also involved in the hydrolysis of GTP during the formation of the 70S ribosomal complex. The protein is Translation initiation factor IF-2 of Geobacillus sp. (strain WCH70).